The following is a 206-amino-acid chain: Probable GTP-binding protein EngB (206 aa).

An EngB-type G domain is found at 27-201 (SGIEVAFAGR…EEKLNQWYSK (175 aa)). Residues 35–42 (GRSNAGKS), 62–66 (GRTQL), 80–83 (DLPG), 147–150 (TKAD), and 180–182 (FSS) each bind GTP. The Mg(2+) site is built by serine 42 and threonine 64.

Belongs to the TRAFAC class TrmE-Era-EngA-EngB-Septin-like GTPase superfamily. EngB GTPase family. The cofactor is Mg(2+).

Functionally, necessary for normal cell division and for the maintenance of normal septation. The chain is Probable GTP-binding protein EngB from Idiomarina loihiensis (strain ATCC BAA-735 / DSM 15497 / L2-TR).